We begin with the raw amino-acid sequence, 480 residues long: MKISREKWSSNFSEWFDWVISQAEIYDYGRYPVKGSGVWMPYGFKIRQNVTTLIRKLLDETGHEEVLFPLLIPETLLKKEAEHIKGFEKEVFWVTHGGEDELEERFALRPTSEVAITLMESLWIKGYSQLPRKFYQIVSVFRYETKATRPMIRVRELSTFKEAHTVHETFEDAARQVDEAVEIYSKFFDILGIPYLISRRPEWDKFAGAEYTIALDTIMPDGRALQIGTAHHLGQHFTKAMDYKVQRADGSHVHPHQTSYGISDRVIATVISINGDDHGPILPPVVAPIEGVIIPIPGKSEEDTEKINKYAMEVESVLKNSGIRVALDASEDKTPGEKYYIWELKGVPIRIEIGPRELNSGTAFLKRRDTLEGKSVKREELVKEFRNLEDQISADLRKRAWEQFKERVKRFQSLDEAKKFLENRGGIAEVPWCGQDSCGLKIEEQVQARVLGTPLKPEPSGNCVVCGKPSTNILRIAKTY.

This sequence belongs to the class-II aminoacyl-tRNA synthetase family. ProS type 3 subfamily. As to quaternary structure, homodimer.

The protein localises to the cytoplasm. The catalysed reaction is tRNA(Pro) + L-proline + ATP = L-prolyl-tRNA(Pro) + AMP + diphosphate. Functionally, catalyzes the attachment of proline to tRNA(Pro) in a two-step reaction: proline is first activated by ATP to form Pro-AMP and then transferred to the acceptor end of tRNA(Pro). In Metallosphaera sedula (strain ATCC 51363 / DSM 5348 / JCM 9185 / NBRC 15509 / TH2), this protein is Proline--tRNA ligase.